The chain runs to 288 residues: tRNA (guanine-N(1)-)-methyltransferase (288 aa).

Positions 82 to 105 (ATDAVDTSDPGDSAAPDSSAPSGA) are disordered. Over residues 89 to 105 (SDPGDSAAPDSSAPSGA) the composition is skewed to low complexity. S-adenosyl-L-methionine-binding positions include glycine 137 and 162–167 (IGDYVL).

This sequence belongs to the RNA methyltransferase TrmD family. In terms of assembly, homodimer.

It is found in the cytoplasm. It carries out the reaction guanosine(37) in tRNA + S-adenosyl-L-methionine = N(1)-methylguanosine(37) in tRNA + S-adenosyl-L-homocysteine + H(+). Specifically methylates guanosine-37 in various tRNAs. In Bifidobacterium longum (strain DJO10A), this protein is tRNA (guanine-N(1)-)-methyltransferase.